We begin with the raw amino-acid sequence, 96 residues long: Co-chaperonin GroES (96 aa).

It belongs to the GroES chaperonin family. In terms of assembly, heptamer of 7 subunits arranged in a ring. Interacts with the chaperonin GroEL.

The protein resides in the cytoplasm. Its function is as follows. Together with the chaperonin GroEL, plays an essential role in assisting protein folding. The GroEL-GroES system forms a nano-cage that allows encapsulation of the non-native substrate proteins and provides a physical environment optimized to promote and accelerate protein folding. GroES binds to the apical surface of the GroEL ring, thereby capping the opening of the GroEL channel. The chain is Co-chaperonin GroES from Allochromatium vinosum (Chromatium vinosum).